A 407-amino-acid chain; its full sequence is Nicotinate phosphoribosyltransferase (407 aa).

His-224 is subject to Phosphohistidine; by autocatalysis.

This sequence belongs to the NAPRTase family. Post-translationally, transiently phosphorylated on a His residue during the reaction cycle. Phosphorylation strongly increases the affinity for substrates and increases the rate of nicotinate D-ribonucleotide production. Dephosphorylation regenerates the low-affinity form of the enzyme, leading to product release.

It carries out the reaction nicotinate + 5-phospho-alpha-D-ribose 1-diphosphate + ATP + H2O = nicotinate beta-D-ribonucleotide + ADP + phosphate + diphosphate. It participates in cofactor biosynthesis; NAD(+) biosynthesis; nicotinate D-ribonucleotide from nicotinate: step 1/1. In terms of biological role, catalyzes the synthesis of beta-nicotinate D-ribonucleotide from nicotinate and 5-phospho-D-ribose 1-phosphate at the expense of ATP. The protein is Nicotinate phosphoribosyltransferase of Pseudomonas syringae pv. tomato (strain ATCC BAA-871 / DC3000).